The following is a 162-amino-acid chain: Caveolin-2 (162 aa).

The Cytoplasmic portion of the chain corresponds to 1–86 (MGLETEKADA…FEVSKYLIYK (86 aa)). At Y19 the chain carries Phosphotyrosine; by SRC. The interval 19-40 (YSRHSGLGYPEPEKCAKSTQDR) is disordered. 2 positions are modified to phosphoserine: S20 and S23. The residue at position 27 (Y27) is a Phosphotyrosine; by SRC. The span at 29-40 (EPEKCAKSTQDR) shows a compositional bias: basic and acidic residues. Position 36 is a phosphoserine (S36). Residues 87–107 (VLTVLLAIPLAFVAGILFATL) constitute an intramembrane region (helical). Residues 108-162 (SCLHIWIVVPFVKTCLMVLPSVQTVWHSITDGFIAPLYKSMGLIFSSISLRLSPE) are Cytoplasmic-facing.

It belongs to the caveolin family. As to quaternary structure, monomer or homodimer. Interacts with CAV1; the interaction forms a stable heterooligomeric complex that is required for targeting to lipid rafts and for caveolae formation. Tyrosine phosphorylated forms do not form heterooligomers with the Tyr-19-phosphorylated form existing as a monomer or dimer, and the Tyr-27-form as a monomer only. Interacts (tyrosine phosphorylated form) with the SH2 domain-containing proteins, RASA1, NCK1 and SRC. Interacts (tyrosine phosphorylated form) with INSR, the interaction (Tyr-27-phosphorylated form) is increased on insulin stimulation. Interacts (Tyr-19 phosphorylated form) with MAPK1 (phosphorylated form); the interaction, promoted by insulin, leads to nuclear location and MAPK1 activation. Interacts with STAT3; the interaction is increased on insulin-induced tyrosine phosphorylation leading to STAT activation. Phosphorylated on serine and tyrosine residues. CAV1 promotes phosphorylation on Ser-23 which then targets the complex to the plasma membrane, lipid rafts and caveolae. Phosphorylation on Ser-36 appears to modulate mitosis in endothelial cells. Phosphorylation on both Tyr-19 and Tyr-27 is required for insulin-induced 'Ser-727' phosphorylation of STAT3 and its activation. Phosphorylation on Tyr-19 is required for insulin-induced phosphorylation of MAPK1 and DNA binding of STAT3. Tyrosine phosphorylation is induced by both EGF and insulin (By. similarity).

It localises to the nucleus. The protein localises to the cytoplasm. Its subcellular location is the golgi apparatus membrane. The protein resides in the cell membrane. It is found in the membrane. It localises to the caveola. May act as a scaffolding protein within caveolar membranes. Interacts directly with G-protein alpha subunits and can functionally regulate their activity. Acts as an accessory protein in conjunction with CAV1 in targeting to lipid rafts and driving caveolae formation. The Ser-36 phosphorylated form has a role in modulating mitosis in endothelial cells. Positive regulator of cellular mitogenesis of the MAPK signaling pathway. Required for the insulin-stimulated nuclear translocation and activation of MAPK1 and STAT3, and the subsequent regulation of cell cycle progression. This chain is Caveolin-2 (CAV2), found in Didelphis virginiana (North American opossum).